The primary structure comprises 282 residues: Mitochondrial outer membrane protein porin (282 aa).

It belongs to the eukaryotic mitochondrial porin family.

Its subcellular location is the mitochondrion outer membrane. In terms of biological role, forms a channel through the cell membrane that allows diffusion of small hydrophilic molecules. The channel adopts an open conformation at low or zero membrane potential and a closed conformation at potentials above 30-40 mV. The open state has a weak anion selectivity whereas the closed state is cation-selective. The protein is Mitochondrial outer membrane protein porin (POR1) of Candida albicans (strain SC5314 / ATCC MYA-2876) (Yeast).